The chain runs to 446 residues: UDP-N-acetylmuramoylalanine--D-glutamate ligase (446 aa).

ATP is bound at residue 115 to 121 (GSNGKST).

The protein belongs to the MurCDEF family.

It is found in the cytoplasm. The enzyme catalyses UDP-N-acetyl-alpha-D-muramoyl-L-alanine + D-glutamate + ATP = UDP-N-acetyl-alpha-D-muramoyl-L-alanyl-D-glutamate + ADP + phosphate + H(+). The protein operates within cell wall biogenesis; peptidoglycan biosynthesis. In terms of biological role, cell wall formation. Catalyzes the addition of glutamate to the nucleotide precursor UDP-N-acetylmuramoyl-L-alanine (UMA). The chain is UDP-N-acetylmuramoylalanine--D-glutamate ligase from Hahella chejuensis (strain KCTC 2396).